Reading from the N-terminus, the 371-residue chain is 4-hydroxy-3-methylbut-2-en-1-yl diphosphate synthase (flavodoxin) (371 aa).

Positions 270, 273, 305, and 312 each coordinate [4Fe-4S] cluster.

Belongs to the IspG family. Requires [4Fe-4S] cluster as cofactor.

It carries out the reaction (2E)-4-hydroxy-3-methylbut-2-enyl diphosphate + oxidized [flavodoxin] + H2O + 2 H(+) = 2-C-methyl-D-erythritol 2,4-cyclic diphosphate + reduced [flavodoxin]. Its pathway is isoprenoid biosynthesis; isopentenyl diphosphate biosynthesis via DXP pathway; isopentenyl diphosphate from 1-deoxy-D-xylulose 5-phosphate: step 5/6. Its function is as follows. Converts 2C-methyl-D-erythritol 2,4-cyclodiphosphate (ME-2,4cPP) into 1-hydroxy-2-methyl-2-(E)-butenyl 4-diphosphate. The polypeptide is 4-hydroxy-3-methylbut-2-en-1-yl diphosphate synthase (flavodoxin) (Shewanella woodyi (strain ATCC 51908 / MS32)).